A 235-amino-acid polypeptide reads, in one-letter code: Orotidine 5'-phosphate decarboxylase (235 aa).

Residues Asp9, Lys31, 58-67 (DLKFHDIPNT), Thr121, Arg180, Gln190, Gly210, and Arg211 each bind substrate. The active-site Proton donor is the Lys60.

This sequence belongs to the OMP decarboxylase family. Type 1 subfamily. In terms of assembly, homodimer.

The enzyme catalyses orotidine 5'-phosphate + H(+) = UMP + CO2. The protein operates within pyrimidine metabolism; UMP biosynthesis via de novo pathway; UMP from orotate: step 2/2. Catalyzes the decarboxylation of orotidine 5'-monophosphate (OMP) to uridine 5'-monophosphate (UMP). This Nitratidesulfovibrio vulgaris (strain ATCC 29579 / DSM 644 / CCUG 34227 / NCIMB 8303 / VKM B-1760 / Hildenborough) (Desulfovibrio vulgaris) protein is Orotidine 5'-phosphate decarboxylase.